A 132-amino-acid chain; its full sequence is Protamine (132 aa).

Disordered regions lie at residues 17–46 (GGKK…RGGR) and 96–115 (SMLK…RRRR). Composition is skewed to basic residues over residues 18–46 (GKKR…RGGR) and 98–115 (LKKR…RRRR).

This sequence belongs to the UPF0771 family. As to expression, testis.

It is found in the nucleus. It localises to the chromosome. Its function is as follows. Protamines substitute for histones in the chromatin of sperm during the haploid phase of spermatogenesis. They compact sperm DNA into a highly condensed, stable and inactive complex. The polypeptide is Protamine (Anthonomus grandis (Mexican cotton boll weevil)).